A 349-amino-acid polypeptide reads, in one-letter code: Tribbles homolog 3 (349 aa).

Positions 1–122 are interaction with DDIT3/CHOP; the sequence is MRATSLAASA…QHVARPTEVL (122 aa). Positions 35–57 are disordered; it reads VRDEPEPGPTPSLPPASDLSPAV. The Protein kinase domain occupies 63 to 310; that stretch reads LGPYILLERE…ALGILLHPWL (248 aa). The disordered stretch occupies residues 317–349; sequence VSPPRSDRREMDQVVPDGPQLEEAEEGEVGLYG. Positions 336–349 are enriched in acidic residues; sequence QLEEAEEGEVGLYG.

This sequence belongs to the protein kinase superfamily. CAMK Ser/Thr protein kinase family. Tribbles subfamily. Interacts with AKT1, AKT2, MAP2K1 and MAP2K7. Interacts with ATF4. Interacts with DDIT3/CHOP and inhibits its interaction with EP300/P300. Interacts with APOBEC3C. Interacts (via N-terminus) with APOBEC3A. Interacts with RELA. In terms of tissue distribution, detected only in the lung. Not detected in the heart, brain, spleen, liver, skeletal muscle, kidney and testis.

It localises to the nucleus. In terms of biological role, inactive protein kinase which acts as a regulator of the integrated stress response (ISR), a process for adaptation to various stress. Inhibits the transcriptional activity of DDIT3/CHOP and is involved in DDIT3/CHOP-dependent cell death during ER stress. May play a role in programmed neuronal cell death but does not appear to affect non-neuronal cells. Acts as a negative feedback regulator of the ATF4-dependent transcription during the ISR: while TRIB3 expression is promoted by ATF4, TRIB3 protein interacts with ATF4 and inhibits ATF4 transcription activity. Disrupts insulin signaling by binding directly to Akt kinases and blocking their activation. May bind directly to and mask the 'Thr-308' phosphorylation site in AKT1. Interacts with the NF-kappa-B transactivator p65 RELA and inhibits its phosphorylation and thus its transcriptional activation activity. Interacts with MAPK kinases and regulates activation of MAP kinases. Can inhibit APOBEC3A editing of nuclear DNA. This chain is Tribbles homolog 3 (Trib3), found in Rattus norvegicus (Rat).